The primary structure comprises 112 residues: MLEQTSYRVERISELIRRELTLLLKTTTKDPRLSGVMITDVLASRDLSSAKVFYTVTKEDRTVVEPILSKASGFFRSRLSKTLDLRHTPALGFIFDSASNTGARIEQLLSKL.

Belongs to the RbfA family. As to quaternary structure, monomer. Binds 30S ribosomal subunits, but not 50S ribosomal subunits or 70S ribosomes.

The protein resides in the cytoplasm. In terms of biological role, one of several proteins that assist in the late maturation steps of the functional core of the 30S ribosomal subunit. Associates with free 30S ribosomal subunits (but not with 30S subunits that are part of 70S ribosomes or polysomes). Required for efficient processing of 16S rRNA. May interact with the 5'-terminal helix region of 16S rRNA. The chain is Ribosome-binding factor A from Ruthia magnifica subsp. Calyptogena magnifica.